The sequence spans 197 residues: Holliday junction branch migration complex subunit RuvA (197 aa).

A domain I region spans residues 1–64; it reads MIASVRGTLI…EDALTLYGFK (64 aa). Residues 65–145 are domain II; sequence TVEQRQLFET…GLPVAPGVSP (81 aa). A flexible linker region spans residues 146–153; it reads AVAAVNAE. The tract at residues 153-197 is domain III; sequence ELSEMLVSLGFSSAEASTAIAALPPDAPLDLEERLRLALRYFGAR.

This sequence belongs to the RuvA family. Homotetramer. Forms an RuvA(8)-RuvB(12)-Holliday junction (HJ) complex. HJ DNA is sandwiched between 2 RuvA tetramers; dsDNA enters through RuvA and exits via RuvB. An RuvB hexamer assembles on each DNA strand where it exits the tetramer. Each RuvB hexamer is contacted by two RuvA subunits (via domain III) on 2 adjacent RuvB subunits; this complex drives branch migration. In the full resolvosome a probable DNA-RuvA(4)-RuvB(12)-RuvC(2) complex forms which resolves the HJ.

Its subcellular location is the cytoplasm. The RuvA-RuvB-RuvC complex processes Holliday junction (HJ) DNA during genetic recombination and DNA repair, while the RuvA-RuvB complex plays an important role in the rescue of blocked DNA replication forks via replication fork reversal (RFR). RuvA specifically binds to HJ cruciform DNA, conferring on it an open structure. The RuvB hexamer acts as an ATP-dependent pump, pulling dsDNA into and through the RuvAB complex. HJ branch migration allows RuvC to scan DNA until it finds its consensus sequence, where it cleaves and resolves the cruciform DNA. The chain is Holliday junction branch migration complex subunit RuvA from Roseiflexus castenholzii (strain DSM 13941 / HLO8).